A 95-amino-acid chain; its full sequence is Co-chaperonin GroES (95 aa).

Belongs to the GroES chaperonin family. Heptamer of 7 subunits arranged in a ring. Interacts with the chaperonin GroEL.

The protein resides in the cytoplasm. Together with the chaperonin GroEL, plays an essential role in assisting protein folding. The GroEL-GroES system forms a nano-cage that allows encapsulation of the non-native substrate proteins and provides a physical environment optimized to promote and accelerate protein folding. GroES binds to the apical surface of the GroEL ring, thereby capping the opening of the GroEL channel. This chain is Co-chaperonin GroES, found in Francisella tularensis subsp. tularensis (strain FSC 198).